A 463-amino-acid polypeptide reads, in one-letter code: Chromosomal replication initiator protein DnaA (463 aa).

Residues 1–83 form a domain I, interacts with DnaA modulators region; sequence MNTNQIILTD…LQLFQHYNNT (83 aa). Residues 83-124 form a domain II region; sequence TIKSIDIITKELPGTTQTVIELPTKTFADIGSSELNSENIFS. The segment at 125–343 is domain III, AAA+ region; it reads TLDVRFTFDN…GALNKVIAHS (219 aa). Glycine 171, glycine 173, lysine 174, and threonine 175 together coordinate ATP. The segment at 344-463 is domain IV, binds dsDNA; sequence NFTLKEITLE…INLLMKILQH (120 aa).

The protein belongs to the DnaA family. In terms of assembly, oligomerizes as a right-handed, spiral filament on DNA at oriC.

It localises to the cytoplasm. In terms of biological role, plays an essential role in the initiation and regulation of chromosomal replication. ATP-DnaA binds to the origin of replication (oriC) to initiate formation of the DNA replication initiation complex once per cell cycle. Binds the DnaA box (a 9 base pair repeat at the origin) and separates the double-stranded (ds)DNA. Forms a right-handed helical filament on oriC DNA; dsDNA binds to the exterior of the filament while single-stranded (ss)DNA is stabiized in the filament's interior. The ATP-DnaA-oriC complex binds and stabilizes one strand of the AT-rich DNA unwinding element (DUE), permitting loading of DNA polymerase. After initiation quickly degrades to an ADP-DnaA complex that is not apt for DNA replication. Binds acidic phospholipids. The sequence is that of Chromosomal replication initiator protein DnaA from Rickettsia akari (strain Hartford).